A 69-amino-acid polypeptide reads, in one-letter code: Beta-defensin 122 (69 aa).

The signal sequence occupies residues 1–19 (MKPFLVTLAVLLLFFQVTA). Disulfide bonds link cysteine 26–cysteine 53, cysteine 33–cysteine 47, and cysteine 37–cysteine 54.

Belongs to the beta-defensin family.

Its subcellular location is the secreted. Its function is as follows. Has antibacterial activity. This chain is Beta-defensin 122 (DEFB122), found in Macaca mulatta (Rhesus macaque).